The following is a 504-amino-acid chain: Ribonuclease Y (504 aa).

A helical membrane pass occupies residues 2–22; that stretch reads TTSIVIGVVLVTVGLTFGWTI. Positions 194–279 constitute a KH domain; that stretch reads TVSTVNLPSE…EIVQKVTQEV (86 aa). Residues 320 to 413 enclose the HD domain; sequence VLYHSKEVAL…VQVADAISAA (94 aa).

The protein belongs to the RNase Y family.

It localises to the cell membrane. In terms of biological role, endoribonuclease that initiates mRNA decay. In Treponema pallidum (strain Nichols), this protein is Ribonuclease Y.